A 435-amino-acid polypeptide reads, in one-letter code: Hydrogenobyrinate a,c-diamide synthase (435 aa).

Residues 247-435 (RIALARDAAF…TGSFFHLIAG (189 aa)) form the GATase cobBQ-type domain. Catalysis depends on C329, which acts as the Nucleophile.

The protein belongs to the CobB/CbiA family. Mg(2+) serves as cofactor.

The enzyme catalyses hydrogenobyrinate + 2 L-glutamine + 2 ATP + 2 H2O = hydrogenobyrinate a,c-diamide + 2 L-glutamate + 2 ADP + 2 phosphate + 2 H(+). Its pathway is cofactor biosynthesis; adenosylcobalamin biosynthesis; cob(II)yrinate a,c-diamide from precorrin-2 (aerobic route): step 9/10. In terms of biological role, catalyzes the ATP-dependent amidation of the two carboxylate groups at positions a and c of hydrogenobyrinate, using either L-glutamine or ammonia as the nitrogen source. In Rhodobacter capsulatus (strain ATCC BAA-309 / NBRC 16581 / SB1003), this protein is Hydrogenobyrinate a,c-diamide synthase.